Reading from the N-terminus, the 363-residue chain is UDP-N-acetylglucosamine--N-acetylmuramyl-(pentapeptide) pyrophosphoryl-undecaprenol N-acetylglucosamine transferase (363 aa).

Residues T16–G18, N128, R167, S195, I249, A268–E273, and Q294 each bind UDP-N-acetyl-alpha-D-glucosamine.

This sequence belongs to the glycosyltransferase 28 family. MurG subfamily.

It is found in the cell inner membrane. The enzyme catalyses di-trans,octa-cis-undecaprenyl diphospho-N-acetyl-alpha-D-muramoyl-L-alanyl-D-glutamyl-meso-2,6-diaminopimeloyl-D-alanyl-D-alanine + UDP-N-acetyl-alpha-D-glucosamine = di-trans,octa-cis-undecaprenyl diphospho-[N-acetyl-alpha-D-glucosaminyl-(1-&gt;4)]-N-acetyl-alpha-D-muramoyl-L-alanyl-D-glutamyl-meso-2,6-diaminopimeloyl-D-alanyl-D-alanine + UDP + H(+). Its pathway is cell wall biogenesis; peptidoglycan biosynthesis. Functionally, cell wall formation. Catalyzes the transfer of a GlcNAc subunit on undecaprenyl-pyrophosphoryl-MurNAc-pentapeptide (lipid intermediate I) to form undecaprenyl-pyrophosphoryl-MurNAc-(pentapeptide)GlcNAc (lipid intermediate II). The protein is UDP-N-acetylglucosamine--N-acetylmuramyl-(pentapeptide) pyrophosphoryl-undecaprenol N-acetylglucosamine transferase of Marinobacter nauticus (strain ATCC 700491 / DSM 11845 / VT8) (Marinobacter aquaeolei).